A 243-amino-acid polypeptide reads, in one-letter code: 1-(5-phosphoribosyl)-5-[(5-phosphoribosylamino)methylideneamino] imidazole-4-carboxamide isomerase (243 aa).

Asp-8 functions as the Proton acceptor in the catalytic mechanism. Catalysis depends on Asp-130, which acts as the Proton donor.

It belongs to the HisA/HisF family.

Its subcellular location is the cytoplasm. It carries out the reaction 1-(5-phospho-beta-D-ribosyl)-5-[(5-phospho-beta-D-ribosylamino)methylideneamino]imidazole-4-carboxamide = 5-[(5-phospho-1-deoxy-D-ribulos-1-ylimino)methylamino]-1-(5-phospho-beta-D-ribosyl)imidazole-4-carboxamide. It functions in the pathway amino-acid biosynthesis; L-histidine biosynthesis; L-histidine from 5-phospho-alpha-D-ribose 1-diphosphate: step 4/9. This Acinetobacter baylyi (strain ATCC 33305 / BD413 / ADP1) protein is 1-(5-phosphoribosyl)-5-[(5-phosphoribosylamino)methylideneamino] imidazole-4-carboxamide isomerase.